The primary structure comprises 166 residues: NADPH-dependent 7-cyano-7-deazaguanine reductase (166 aa).

Cys57 acts as the Thioimide intermediate in catalysis. Catalysis depends on Asp64, which acts as the Proton donor. Substrate is bound by residues 79–81 (VES) and 98–99 (HE).

It belongs to the GTP cyclohydrolase I family. QueF type 1 subfamily.

The protein resides in the cytoplasm. It carries out the reaction 7-aminomethyl-7-carbaguanine + 2 NADP(+) = 7-cyano-7-deazaguanine + 2 NADPH + 3 H(+). It participates in tRNA modification; tRNA-queuosine biosynthesis. Catalyzes the NADPH-dependent reduction of 7-cyano-7-deazaguanine (preQ0) to 7-aminomethyl-7-deazaguanine (preQ1). The protein is NADPH-dependent 7-cyano-7-deazaguanine reductase of Staphylococcus epidermidis (strain ATCC 35984 / DSM 28319 / BCRC 17069 / CCUG 31568 / BM 3577 / RP62A).